The primary structure comprises 113 residues: MQAKAVARTVRIAPRKARLVMDLIRGKQVGEAVSILNLTPRAASPIIEKVLKSAIANAEHNYEMDANNLVISQAFVDEGPTLKRFRPRAMGRASQINKRTSHITIVVSEKKEG.

This sequence belongs to the universal ribosomal protein uL22 family. Part of the 50S ribosomal subunit.

Functionally, this protein binds specifically to 23S rRNA; its binding is stimulated by other ribosomal proteins, e.g. L4, L17, and L20. It is important during the early stages of 50S assembly. It makes multiple contacts with different domains of the 23S rRNA in the assembled 50S subunit and ribosome. The globular domain of the protein is located near the polypeptide exit tunnel on the outside of the subunit, while an extended beta-hairpin is found that lines the wall of the exit tunnel in the center of the 70S ribosome. The polypeptide is Large ribosomal subunit protein uL22 (Bacillus subtilis (strain 168)).